A 75-amino-acid chain; its full sequence is ATP synthase subunit c (75 aa).

2 helical membrane-spanning segments follow: residues 12 to 32 and 49 to 69; these read LASI…GIVV and LTVL…IGIG.

Belongs to the ATPase C chain family. As to quaternary structure, F-type ATPases have 2 components, F(1) - the catalytic core - and F(0) - the membrane proton channel. F(1) has five subunits: alpha(3), beta(3), gamma(1), delta(1), epsilon(1). F(0) has three main subunits: a(1), b(2) and c(10-14). The alpha and beta chains form an alternating ring which encloses part of the gamma chain. F(1) is attached to F(0) by a central stalk formed by the gamma and epsilon chains, while a peripheral stalk is formed by the delta and b chains.

Its subcellular location is the cell membrane. F(1)F(0) ATP synthase produces ATP from ADP in the presence of a proton or sodium gradient. F-type ATPases consist of two structural domains, F(1) containing the extramembraneous catalytic core and F(0) containing the membrane proton channel, linked together by a central stalk and a peripheral stalk. During catalysis, ATP synthesis in the catalytic domain of F(1) is coupled via a rotary mechanism of the central stalk subunits to proton translocation. In terms of biological role, key component of the F(0) channel; it plays a direct role in translocation across the membrane. A homomeric c-ring of between 10-14 subunits forms the central stalk rotor element with the F(1) delta and epsilon subunits. This Tropheryma whipplei (strain TW08/27) (Whipple's bacillus) protein is ATP synthase subunit c.